The primary structure comprises 205 residues: Large ribosomal subunit protein uL3 (205 aa).

The tract at residues 126 to 150 is disordered; that stretch reads GGPKTHGQSDRHRAPGSISSTTTPG.

This sequence belongs to the universal ribosomal protein uL3 family. In terms of assembly, part of the 50S ribosomal subunit. Forms a cluster with proteins L14 and L19.

Functionally, one of the primary rRNA binding proteins, it binds directly near the 3'-end of the 23S rRNA, where it nucleates assembly of the 50S subunit. The chain is Large ribosomal subunit protein uL3 from Dehalococcoides mccartyi (strain ATCC BAA-2266 / KCTC 15142 / 195) (Dehalococcoides ethenogenes (strain 195)).